The sequence spans 245 residues: Biosynthetic peptidoglycan transglycosylase (245 aa).

The helical transmembrane segment at 13 to 35 (VGLARWIVYAGSVFAGAWLATQL) threads the bilayer.

It belongs to the glycosyltransferase 51 family.

It localises to the cell inner membrane. It catalyses the reaction [GlcNAc-(1-&gt;4)-Mur2Ac(oyl-L-Ala-gamma-D-Glu-L-Lys-D-Ala-D-Ala)](n)-di-trans,octa-cis-undecaprenyl diphosphate + beta-D-GlcNAc-(1-&gt;4)-Mur2Ac(oyl-L-Ala-gamma-D-Glu-L-Lys-D-Ala-D-Ala)-di-trans,octa-cis-undecaprenyl diphosphate = [GlcNAc-(1-&gt;4)-Mur2Ac(oyl-L-Ala-gamma-D-Glu-L-Lys-D-Ala-D-Ala)](n+1)-di-trans,octa-cis-undecaprenyl diphosphate + di-trans,octa-cis-undecaprenyl diphosphate + H(+). It participates in cell wall biogenesis; peptidoglycan biosynthesis. In terms of biological role, peptidoglycan polymerase that catalyzes glycan chain elongation from lipid-linked precursors. This chain is Biosynthetic peptidoglycan transglycosylase, found in Burkholderia vietnamiensis (strain G4 / LMG 22486) (Burkholderia cepacia (strain R1808)).